The primary structure comprises 910 residues: Leucine--tRNA ligase (910 aa).

The 'HIGH' region signature appears at 50–60 (PYTNGSLHVGH). The short motif at 611 to 615 (KISKS) is the 'KMSKS' region element. Lysine 614 lines the ATP pocket.

The protein belongs to the class-I aminoacyl-tRNA synthetase family.

Its subcellular location is the cytoplasm. The enzyme catalyses tRNA(Leu) + L-leucine + ATP = L-leucyl-tRNA(Leu) + AMP + diphosphate. In Thermoplasma acidophilum (strain ATCC 25905 / DSM 1728 / JCM 9062 / NBRC 15155 / AMRC-C165), this protein is Leucine--tRNA ligase.